The primary structure comprises 197 residues: Phospholipid hydroperoxide glutathione peroxidase GPX4 (197 aa).

S40 is modified (phosphoserine). The active site involves U73. A non-standard amino acid (selenocysteine) is located at residue U73.

This sequence belongs to the glutathione peroxidase family. In terms of assembly, monomer. Has a tendency to form higher mass oligomers. Interacts with FUNDC1; this interaction promotes GPX4 recruitment into mitochondria through TOM/TIM complex where it is degraded by mitophagy. In terms of tissue distribution, widely expressed with the highest levels in testis, heart, cerebrum, ileum, stomach, liver, jejunum and epididymis. Expressed primarily in testis and sperm midpiece (at protein level). Expressed in brain (at protein level). Expressed in heart, liver and kidney (at protein level). Expressed in retina, especially in inner segments of photoreceptor cells (at protein level). Highly expressed during embryogenesis. Down-regulated between 14.5 dpc and 17.5 dpc. As to expression, highly expressed during embryogenesis. In contrast to isoform Mitochondrial and isoform Nuclear, which are down-regulated between 14.5 dpc and 17.5 dpc, remains constant. In terms of tissue distribution, mainly expressed in sperm. Weakly expressed during embryogenesis. Down-regulated between 14.5 dpc and 17.5 dpc.

It is found in the mitochondrion. Its subcellular location is the cytoplasm. The protein localises to the nucleus. The enzyme catalyses a hydroperoxy polyunsaturated fatty acid + 2 glutathione = a hydroxy polyunsaturated fatty acid + glutathione disulfide + H2O. The catalysed reaction is 2 glutathione + H2O2 = glutathione disulfide + 2 H2O. It catalyses the reaction tert-butyl hydroperoxide + 2 glutathione = tert-butanol + glutathione disulfide + H2O. It carries out the reaction cumene hydroperoxide + 2 glutathione = 2-phenylpropan-2-ol + glutathione disulfide + H2O. The enzyme catalyses (9S)-hydroperoxy-(10E,12Z)-octadecadienoate + 2 glutathione = (9S)-hydroxy-(10E,12Z)-octadecadienoate + glutathione disulfide + H2O. The catalysed reaction is (13S)-hydroperoxy-(9Z,11E)-octadecadienoate + 2 glutathione = (13S)-hydroxy-(9Z,11E)-octadecadienoate + glutathione disulfide + H2O. It catalyses the reaction (5S)-hydroperoxy-(6E,8Z,11Z,14Z)-eicosatetraenoate + 2 glutathione = (5S)-hydroxy-(6E,8Z,11Z,14Z)-eicosatetraenoate + glutathione disulfide + H2O. It carries out the reaction (12R)-hydroperoxy-(5Z,8Z,10E,14Z)-eicosatetraenoate + 2 glutathione = (12R)-hydroxy-(5Z,8Z,10E,14Z)-eicosatetraenoate + glutathione disulfide + H2O. The enzyme catalyses (12S)-hydroperoxy-(5Z,8Z,10E,14Z)-eicosatetraenoate + 2 glutathione = (12S)-hydroxy-(5Z,8Z,10E,14Z)-eicosatetraenoate + glutathione disulfide + H2O. The catalysed reaction is (15S)-hydroperoxy-(5Z,8Z,11Z,13E)-eicosatetraenoate + 2 glutathione = (15S)-hydroxy-(5Z,8Z,11Z,13E)-eicosatetraenoate + glutathione disulfide + H2O. It catalyses the reaction (5S)-hydroperoxy-(6E,8Z,11Z,14Z,17Z)-eicosapentaenoate + 2 glutathione = (5S)-hydroxy-(6E,8Z,11Z,14Z,17Z)-eicosapentaenoate + glutathione disulfide + H2O. It carries out the reaction (12S)-hydroperoxy-(5Z,8Z,10E,14Z,17Z)-eicosapentaenoate + 2 glutathione = (12S)-hydroxy-(5Z,8Z,10E,14Z,17Z)-eicosapentaenoate + glutathione disulfide + H2O. The enzyme catalyses (15S)-hydroperoxy-(5Z,8Z,11Z,13E,17Z)-eicosapentaenoate + 2 glutathione = (15S)-hydroxy-(5Z,8Z,11Z,13E,17Z)-eicosapentaenoate + glutathione disulfide + H2O. The catalysed reaction is (15S)-hydroperoxy-(11Z,13E)-eicosadienoate + 2 glutathione = (15S)-hydroxy-(11Z,13E)-eicosadienoate + glutathione disulfide + H2O. It catalyses the reaction (17S)-hydroperoxy-(4Z,7Z,10Z,13Z,15E,19Z)-docosahexaenoate + 2 glutathione = (17S)-hydroxy-(4Z,7Z,10Z,13Z,15E,19Z)-docosahexaenoate + glutathione disulfide + H2O. It carries out the reaction a hydroperoxy-1,2-diacyl-glycero-3-phosphocholine + 2 glutathione = a hydroxy-1,2-diacyl-glycero-3-phosphocholine + glutathione disulfide + H2O. Functionally, essential antioxidant peroxidase that directly reduces phospholipid hydroperoxide even if they are incorporated in membranes and lipoproteins. Can also reduce fatty acid hydroperoxide, cholesterol hydroperoxide and thymine hydroperoxide. Plays a key role in protecting cells from oxidative damage by preventing membrane lipid peroxidation. Required to prevent cells from ferroptosis, a non-apoptotic cell death resulting from an iron-dependent accumulation of lipid reactive oxygen species. The presence of selenocysteine (Sec) versus Cys at the active site is essential for life: it provides resistance to overoxidation and prevents cells against ferroptosis. The presence of Sec at the active site is also essential for the survival of a specific type of parvalbumin-positive interneurons, thereby preventing against fatal epileptic seizures. May be required to protect cells from the toxicity of ingested lipid hydroperoxides. Required for normal sperm development and male fertility. Essential for maturation and survival of photoreceptor cells. Plays a role in a primary T-cell response to viral and parasitic infection by protecting T-cells from ferroptosis and by supporting T-cell expansion. Plays a role of glutathione peroxidase in platelets in the arachidonic acid metabolism. Reduces hydroperoxy ester lipids formed by a 15-lipoxygenase that may play a role as down-regulator of the cellular 15-lipoxygenase pathway. Can also reduce small soluble hydroperoxides such as H2O2 and tert-butyl hydroperoxide. Its function is as follows. Specifically able to suppress the production of leukotriene and prostaglandin in response to several stimuli by reducing fatty acid hydroperoxide. Specifically required to prevent mitochondrial cell death by mediating reduction of cardiolipin hydroperoxide. Also required for normal sperm development and male fertility. In terms of biological role, required for male fertility by stabilizing the condensed chromatin in sperm nuclei. The polypeptide is Phospholipid hydroperoxide glutathione peroxidase GPX4 (Mus musculus (Mouse)).